Here is a 314-residue protein sequence, read N- to C-terminus: Malate dehydrogenase (314 aa).

Residues 11 to 16 (GSGNIG) and Asp35 each bind NAD(+). Arg84 and Arg90 together coordinate substrate. NAD(+) contacts are provided by residues Asn97 and 120 to 122 (ITN). The substrate site is built by Asn122 and Arg153. His177 functions as the Proton acceptor in the catalytic mechanism.

It belongs to the LDH/MDH superfamily. MDH type 3 family.

The catalysed reaction is (S)-malate + NAD(+) = oxaloacetate + NADH + H(+). Catalyzes the reversible oxidation of malate to oxaloacetate. The chain is Malate dehydrogenase from Rickettsia conorii (strain ATCC VR-613 / Malish 7).